Consider the following 60-residue polypeptide: Large ribosomal subunit protein bL32 (60 aa).

It belongs to the bacterial ribosomal protein bL32 family.

The sequence is that of Large ribosomal subunit protein bL32 from Clostridium novyi (strain NT).